The following is a 309-amino-acid chain: Olfactory receptor 5H2 (309 aa).

Topologically, residues 1–28 (MEQDNTTLLTEFVLTGLTYQPEWKMPLF) are extracellular. The N-linked (GlcNAc...) asparagine glycan is linked to Asn5. A helical membrane pass occupies residues 29–49 (LVFLVIYLITIVWNLGLIALI). At 50–56 (WNDPQLH) the chain is on the cytoplasmic side. Residues 57 to 77 (IPMYFFLGSLAFVDAWISSTV) form a helical membrane-spanning segment. The Extracellular portion of the chain corresponds to 78 to 97 (TPKMLVNFLAKNRMISLSEC). A disulfide bridge connects residues Cys97 and Cys179. Residues 98–118 (MIQFFSFAFGGTTECFLLATM) form a helical membrane-spanning segment. At 119–143 (AYDRYVAICKPLLYPVIMNNSLCIR) the chain is on the cytoplasmic side. The chain crosses the membrane as a helical span at residues 144 to 164 (LLAFSFLGGFLHALIHEVLIF). Residues 165–193 (RLTFCNSNIIHHFYCDIIPLFMISCTDPS) are Extracellular-facing. A helical transmembrane segment spans residues 194-214 (INFLMVFILSGSIQVFTIVTV). Residues 215–239 (LNSYTFALFTILKKKSVRGVRKAFS) lie on the Cytoplasmic side of the membrane. Residues 240–260 (TCGAHLLSVSLYYGPLIFMYL) traverse the membrane as a helical segment. Topologically, residues 261 to 271 (RPASPQADDQD) are extracellular. A helical membrane pass occupies residues 272 to 292 (MIDSVFYTIIIPLLNPIIYSL). At 293 to 309 (RNKQVIDSFTKMVKRNV) the chain is on the cytoplasmic side.

This sequence belongs to the G-protein coupled receptor 1 family.

Its subcellular location is the cell membrane. In terms of biological role, odorant receptor. This is Olfactory receptor 5H2 (OR5H2) from Homo sapiens (Human).